The primary structure comprises 378 residues: Protein-glutamate methylesterase/protein-glutamine glutaminase 2 (378 aa).

Residues 4–121 (KVLVVDDSGF…SRNPEKVKQL (118 aa)) form the Response regulatory domain. Position 55 is a 4-aspartylphosphate (Asp-55). The interval 141-188 (APAPAAAPTPAPIPAAAPSSFGSHSAPARPAPAPAPTRAPAASASSPA) is disordered. Pro residues predominate over residues 145–155 (AAAPTPAPIPA). Composition is skewed to low complexity over residues 156–168 (AAPSSFGSHSAPA) and 178–188 (RAPAASASSPA). The CheB-type methylesterase domain maps to 187-378 (PAPKRKNYKL…IGKHIVEACV (192 aa)). Catalysis depends on residues Ser-202, His-229, and Asp-322.

Belongs to the CheB family. In terms of processing, phosphorylated by CheA. Phosphorylation of the N-terminal regulatory domain activates the methylesterase activity.

The protein localises to the cytoplasm. The enzyme catalyses [protein]-L-glutamate 5-O-methyl ester + H2O = L-glutamyl-[protein] + methanol + H(+). It carries out the reaction L-glutaminyl-[protein] + H2O = L-glutamyl-[protein] + NH4(+). Functionally, involved in chemotaxis. Part of a chemotaxis signal transduction system that modulates chemotaxis in response to various stimuli. Catalyzes the demethylation of specific methylglutamate residues introduced into the chemoreceptors (methyl-accepting chemotaxis proteins or MCP) by CheR. Also mediates the irreversible deamidation of specific glutamine residues to glutamic acid. This is Protein-glutamate methylesterase/protein-glutamine glutaminase 2 from Pseudomonas fluorescens (strain Pf0-1).